Consider the following 467-residue polypeptide: DNA methyltransferase 1-associated protein 1 (467 aa).

Composition is skewed to basic and acidic residues over residues 1–11 (MATGADVRDIL) and 26–48 (SKKD…LTFK). Residues 1–48 (MATGADVRDILELGGPEGDAASGTISKKDIINPDKKKSKKSSETLTFK) are disordered. Residue K27 forms a Glycyl lysine isopeptide (Lys-Gly) (interchain with G-Cter in SUMO2) linkage. Positions 149–199 (DDAWTKAETDHLFDLSRRFDLRFVVIHDRYDHQQFKKRSVEDLKERYYHIC) constitute an SANT domain. Residue K214 forms a Glycyl lysine isopeptide (Lys-Gly) (interchain with G-Cter in SUMO2) linkage. A coiled-coil region spans residues 225-275 (RRKEQLERLYNRTPEQVAEEEYLLQELRKIEARKKEREKRSQDLQKLITAA). A compositionally biased stretch (basic and acidic residues) spans 258–267 (KKEREKRSQD). Disordered stretches follow at residues 258–305 (KKER…PAVP) and 404–467 (LGGP…AKKP). Residues 406–422 (GPATPASGPGPASAEPA) show a composition bias toward low complexity. At T445 the chain carries Phosphothreonine. Phosphoserine is present on S448.

In terms of assembly, component of the NuA4 histone acetyltransferase complex which contains the catalytic subunit KAT5/TIP60 and the subunits EP400, TRRAP/PAF400, BRD8/SMAP, EPC1, DMAP1/DNMAP1, RUVBL1/TIP49, RUVBL2, ING3, actin, ACTL6A/BAF53A, MORF4L1/MRG15, MORF4L2/MRGX, MRGBP, YEATS4/GAS41, VPS72/YL1 and MEAF6. Component of a NuA4-related complex which contains EP400, TRRAP/PAF400, SRCAP, BRD8/SMAP, EPC1, DMAP1/DNMAP1, RUVBL1/TIP49, RUVBL2, actin, ACTL6A/BAF53A, VPS72 and YEATS4/GAS41. DMAP1 also forms a complex with DNMT1 and HDAC2. Throughout S phase it interacts directly with the N-terminus of DNMT1, which serves to recruit DMAP1 to replication foci. DMAP1 interacts with ING1, a component of the mSin3A transcription repressor complex, although this interaction is not required for recruitment of ING1 to heterochromatin. Interacts directly with the transcriptional corepressor TSG101. Interacts with the pro-apoptotic protein DAXX. Interacts with URI1.

Its subcellular location is the nucleus. The protein localises to the cytoplasm. Functionally, involved in transcription repression and activation. Its interaction with HDAC2 may provide a mechanism for histone deacetylation in heterochromatin following replication of DNA at late firing origins. Can also repress transcription independently of histone deacetylase activity. May specifically potentiate DAXX-mediated repression of glucocorticoid receptor-dependent transcription. Component of the NuA4 histone acetyltransferase (HAT) complex which is involved in transcriptional activation of select genes principally by acetylation of nucleosomal histones H4 and H2A. This modification may both alter nucleosome - DNA interactions and promote interaction of the modified histones with other proteins which positively regulate transcription. This complex may be required for the activation of transcriptional programs associated with oncogene and proto-oncogene mediated growth induction, tumor suppressor mediated growth arrest and replicative senescence, apoptosis, and DNA repair. NuA4 may also play a direct role in DNA repair when recruited to sites of DNA damage. Participates in the nuclear localization of URI1 and increases its transcriptional corepressor activity. In Homo sapiens (Human), this protein is DNA methyltransferase 1-associated protein 1 (DMAP1).